Consider the following 207-residue polypeptide: Large ribosomal subunit protein uL4 (207 aa).

Positions 49 to 78 are disordered; it reads HAVKNRSAVSGGGRKPWRQKGTGRARQGSI.

It belongs to the universal ribosomal protein uL4 family. Part of the 50S ribosomal subunit.

Its function is as follows. One of the primary rRNA binding proteins, this protein initially binds near the 5'-end of the 23S rRNA. It is important during the early stages of 50S assembly. It makes multiple contacts with different domains of the 23S rRNA in the assembled 50S subunit and ribosome. Forms part of the polypeptide exit tunnel. The polypeptide is Large ribosomal subunit protein uL4 (Streptococcus sanguinis (strain SK36)).